A 98-amino-acid chain; its full sequence is Large ribosomal subunit protein eL14 (98 aa).

This sequence belongs to the eukaryotic ribosomal protein eL14 family.

The chain is Large ribosomal subunit protein eL14 from Hyperthermus butylicus (strain DSM 5456 / JCM 9403 / PLM1-5).